The following is a 956-amino-acid chain: Matrilin-2 (956 aa).

An N-terminal signal peptide occupies residues Met-1–Gly-23. The region spanning Asp-57–Phe-232 is the VWFA 1 domain. N-linked (GlcNAc...) asparagine glycosylation is present at Asn-221. 10 EGF-like domains span residues Thr-238 to Arg-278, Ile-279 to Thr-319, Ala-320 to Ser-360, Lys-361 to Arg-401, Arg-402 to Ser-442, Arg-443 to Ser-483, Arg-484 to Ala-524, Lys-525 to Arg-565, Arg-566 to Arg-606, and Arg-607 to Lys-647. Cystine bridges form between Cys-242–Cys-253, Cys-249–Cys-262, Cys-264–Cys-277, Cys-283–Cys-294, Cys-290–Cys-303, Cys-305–Cys-318, Cys-324–Cys-335, Cys-331–Cys-344, Cys-346–Cys-359, Cys-365–Cys-376, Cys-372–Cys-385, Cys-387–Cys-400, Cys-406–Cys-417, Cys-413–Cys-426, Cys-428–Cys-441, Cys-447–Cys-458, Cys-454–Cys-467, Cys-469–Cys-482, Cys-488–Cys-499, Cys-495–Cys-508, Cys-510–Cys-523, Cys-529–Cys-540, Cys-536–Cys-549, Cys-551–Cys-564, Cys-570–Cys-581, Cys-577–Cys-590, Cys-592–Cys-605, Cys-611–Cys-622, Cys-618–Cys-631, and Cys-633–Cys-646. A VWFA 2 domain is found at Asp-655–Leu-830. An N-linked (GlcNAc...) asparagine glycan is attached at Asn-890. Residues Lys-917–Tyr-955 adopt a coiled-coil conformation.

Detected in a variety of organs, including calvaria, uterus, heart and brain, as well as fibroblast and osteoblast cell lines.

The protein resides in the secreted. Its function is as follows. Involved in matrix assembly. The chain is Matrilin-2 (Matn2) from Mus musculus (Mouse).